A 238-amino-acid polypeptide reads, in one-letter code: LRRN4 C-terminal-like protein (238 aa).

The first 22 residues, 1-22 (MLGSPCLLWLLAVTFLVPRAQP), serve as a signal peptide directing secretion. Over 23–194 (LAPQDFEEEE…RLAVPPNPRT (172 aa)) the chain is Extracellular. Residues 82-176 (PPDPPRMGEV…AGGEGLEGAD (95 aa)) enclose the Fibronectin type-III domain. N-linked (GlcNAc...) asparagine glycosylation occurs at Asn-132. The chain crosses the membrane as a helical span at residues 195–215 (LVHAAVGVGTALALLSCAALV). Topologically, residues 216-238 (WHFCLRDRWGCPRRAAARAAGAL) are cytoplasmic.

Its subcellular location is the membrane. This is LRRN4 C-terminal-like protein (LRRN4CL) from Homo sapiens (Human).